The chain runs to 117 residues: UPF0375 protein Y45F10C.2 (117 aa).

The first 20 residues, 1-20 (MNSFVSTVLLLSVTIALVSG), serve as a signal peptide directing secretion.

The protein belongs to the UPF0375 family. As to expression, expressed in the uterine epithelium.

The protein resides in the secreted. Functionally, negatively regulates the egg-laying rate by promoting retention of fertilized eggs. In Caenorhabditis elegans, this protein is UPF0375 protein Y45F10C.2.